Consider the following 319-residue polypeptide: Beta-ketoacyl-[acyl-carrier-protein] synthase III (319 aa).

Catalysis depends on residues Cys-113 and His-246. The segment at 247 to 251 (QANIR) is ACP-binding. The active site involves Asn-276.

The protein belongs to the thiolase-like superfamily. FabH family. Homodimer.

The protein resides in the cytoplasm. It carries out the reaction malonyl-[ACP] + acetyl-CoA + H(+) = 3-oxobutanoyl-[ACP] + CO2 + CoA. It participates in lipid metabolism; fatty acid biosynthesis. Its function is as follows. Catalyzes the condensation reaction of fatty acid synthesis by the addition to an acyl acceptor of two carbons from malonyl-ACP. Catalyzes the first condensation reaction which initiates fatty acid synthesis and may therefore play a role in governing the total rate of fatty acid production. Possesses both acetoacetyl-ACP synthase and acetyl transacylase activities. Its substrate specificity determines the biosynthesis of branched-chain and/or straight-chain of fatty acids. The chain is Beta-ketoacyl-[acyl-carrier-protein] synthase III from Ehrlichia canis (strain Jake).